Here is a 120-residue protein sequence, read N- to C-terminus: NAD(P)H-quinone oxidoreductase subunit 3, chloroplastic (120 aa).

The next 3 membrane-spanning stretches (helical) occupy residues 9-29, 64-84, and 89-109; these read YFWL…PISS, MFAS…PWAM, and LGVP…VGSV.

This sequence belongs to the complex I subunit 3 family. NDH is composed of at least 16 different subunits, 5 of which are encoded in the nucleus.

The protein localises to the plastid. The protein resides in the chloroplast thylakoid membrane. The catalysed reaction is a plastoquinone + NADH + (n+1) H(+)(in) = a plastoquinol + NAD(+) + n H(+)(out). The enzyme catalyses a plastoquinone + NADPH + (n+1) H(+)(in) = a plastoquinol + NADP(+) + n H(+)(out). In terms of biological role, NDH shuttles electrons from NAD(P)H:plastoquinone, via FMN and iron-sulfur (Fe-S) centers, to quinones in the photosynthetic chain and possibly in a chloroplast respiratory chain. The immediate electron acceptor for the enzyme in this species is believed to be plastoquinone. Couples the redox reaction to proton translocation, and thus conserves the redox energy in a proton gradient. In Huperzia lucidula (Shining clubmoss), this protein is NAD(P)H-quinone oxidoreductase subunit 3, chloroplastic.